The chain runs to 69 residues: Large ribosomal subunit protein uL29 (69 aa).

This sequence belongs to the universal ribosomal protein uL29 family.

This Oenococcus oeni (strain ATCC BAA-331 / PSU-1) protein is Large ribosomal subunit protein uL29.